Reading from the N-terminus, the 304-residue chain is D-alanine--D-alanine ligase (304 aa).

In terms of domain architecture, ATP-grasp spans 103–299 (KLIWQALGLP…FADLCIEILK (197 aa)). 129–184 (EEKLGLPMFVKPAAEGSSVGVVKVKGKGRLKSVYEELKHLQGEIIAERFIGGGEYS) contributes to the ATP binding site. The Mg(2+) site is built by D253, E266, and N268.

The protein belongs to the D-alanine--D-alanine ligase family. Mg(2+) is required as a cofactor. Requires Mn(2+) as cofactor.

It is found in the cytoplasm. The enzyme catalyses 2 D-alanine + ATP = D-alanyl-D-alanine + ADP + phosphate + H(+). It functions in the pathway cell wall biogenesis; peptidoglycan biosynthesis. Cell wall formation. The polypeptide is D-alanine--D-alanine ligase (Neisseria meningitidis serogroup C / serotype 2a (strain ATCC 700532 / DSM 15464 / FAM18)).